The following is a 314-amino-acid chain: MYKNNHANHSNHLENHDLDNFSKTGYSNSRLDAHTVCISDPKLSFDAMTIVGNLNRDNAQALSKFMSVEPQIRLWDILQTKFKAKALQEKVYIEYDKVKADSWDRRNMRIEFNPNKLTRDEMIWLKQNIISYMEDDGFTRLDLAFDFEEDLSDYYAMSDKAVKKTIFYGRNGKPETKYFGVRDSNRFIRIYNKKQERKDNADAEVMSEHLWRVEIELKRDMVDYWNDCFSDLHILQPDWKTIQRTADRAIVFMLLSDEEEWGKLHRNSRTKYKNLIKEISPVDLTDLMKSTLKANEKQLQKQIDFWQHEFKFWK.

Belongs to the plasmid replication initiation factor family.

Its function is as follows. This protein is probably a specific topoisomerase involved in initiating replication. This protein is specifically required and may be rate-limiting for replication of the plasmid in vivo. The polypeptide is Replication initiation protein (repC) (Staphylococcus aureus).